The chain runs to 184 residues: Phosphorelay intermediate protein YPD1 (184 aa).

In terms of domain architecture, HPt spans 30 to 125 (EEGFSKSLVE…SAENVAVNDG (96 aa)). The residue at position 69 (His69) is a Phosphohistidine. The interval 120–152 (VAVNDGETNPENGSNGNETSNNKTNTSNIPDES) is disordered. Over residues 125–147 (GETNPENGSNGNETSNNKTNTSN) the composition is skewed to low complexity.

The protein belongs to the YPD1 family.

Its subcellular location is the cytoplasm. It is found in the nucleus. Phosphorelay intermediate protein that is part of the bifurcated SLN1-YPD1-SKN7/SSK1 two-component regulatory system, which controls activity of the HOG1 pathway and gene expression in response to oxidative stress and probably to changes in the osmolarity of the extracellular environment. Catalyzes the phosphoryl group transfer from the membrane-bound histidine kinase SLN1 to two distinct response regulators SSK1 and SKN7. This chain is Phosphorelay intermediate protein YPD1 (YPD1), found in Candida albicans (strain SC5314 / ATCC MYA-2876) (Yeast).